The chain runs to 366 residues: Ribosomal RNA large subunit methyltransferase M (366 aa).

Residues S187, 220–223 (SPGG), D239, D259, and D276 contribute to the S-adenosyl-L-methionine site. K305 acts as the Proton acceptor in catalysis.

It belongs to the class I-like SAM-binding methyltransferase superfamily. RNA methyltransferase RlmE family. RlmM subfamily. Monomer.

The protein resides in the cytoplasm. The enzyme catalyses cytidine(2498) in 23S rRNA + S-adenosyl-L-methionine = 2'-O-methylcytidine(2498) in 23S rRNA + S-adenosyl-L-homocysteine + H(+). Catalyzes the 2'-O-methylation at nucleotide C2498 in 23S rRNA. The sequence is that of Ribosomal RNA large subunit methyltransferase M from Tolumonas auensis (strain DSM 9187 / NBRC 110442 / TA 4).